The chain runs to 404 residues: Exodeoxyribonuclease 7 large subunit (404 aa).

Belongs to the XseA family. As to quaternary structure, heterooligomer composed of large and small subunits.

It is found in the cytoplasm. It carries out the reaction Exonucleolytic cleavage in either 5'- to 3'- or 3'- to 5'-direction to yield nucleoside 5'-phosphates.. In terms of biological role, bidirectionally degrades single-stranded DNA into large acid-insoluble oligonucleotides, which are then degraded further into small acid-soluble oligonucleotides. The protein is Exodeoxyribonuclease 7 large subunit of Tropheryma whipplei (strain TW08/27) (Whipple's bacillus).